A 425-amino-acid chain; its full sequence is Tyrosine--tRNA ligase (425 aa).

Tyr37 provides a ligand contact to L-tyrosine. Residues 42–51 carry the 'HIGH' region motif; the sequence is PTADSLHLGH. L-tyrosine-binding residues include Tyr175 and Gln179. Residues 235 to 239 carry the 'KMSKS' region motif; the sequence is KFGKT. Lys238 lines the ATP pocket. Positions 357-414 constitute an S4 RNA-binding domain; it reads ADLQQALVSAELVPSRGQARTMISSNAVTINGEKQANPEYIFSASDRLFDRYTLLRRG.

It belongs to the class-I aminoacyl-tRNA synthetase family. TyrS type 1 subfamily. Homodimer.

Its subcellular location is the cytoplasm. It carries out the reaction tRNA(Tyr) + L-tyrosine + ATP = L-tyrosyl-tRNA(Tyr) + AMP + diphosphate + H(+). Functionally, catalyzes the attachment of tyrosine to tRNA(Tyr) in a two-step reaction: tyrosine is first activated by ATP to form Tyr-AMP and then transferred to the acceptor end of tRNA(Tyr). In Pectobacterium atrosepticum (strain SCRI 1043 / ATCC BAA-672) (Erwinia carotovora subsp. atroseptica), this protein is Tyrosine--tRNA ligase.